A 98-amino-acid polypeptide reads, in one-letter code: NADH-ubiquinone oxidoreductase chain 4L (98 aa).

3 helical membrane-spanning segments follow: residues 1 to 21 (MPIIYMNIMLAFTISLLGMLI), 29 to 49 (SLLCLEGMMLSLFIMNTLMAL), and 58 to 78 (IVPITLLVFAACEAAVGLALL).

Belongs to the complex I subunit 4L family. In terms of assembly, core subunit of respiratory chain NADH dehydrogenase (Complex I) which is composed of 45 different subunits.

It is found in the mitochondrion inner membrane. The catalysed reaction is a ubiquinone + NADH + 5 H(+)(in) = a ubiquinol + NAD(+) + 4 H(+)(out). In terms of biological role, core subunit of the mitochondrial membrane respiratory chain NADH dehydrogenase (Complex I) which catalyzes electron transfer from NADH through the respiratory chain, using ubiquinone as an electron acceptor. Part of the enzyme membrane arm which is embedded in the lipid bilayer and involved in proton translocation. The protein is NADH-ubiquinone oxidoreductase chain 4L (MT-ND4L) of Colobus guereza (Mantled guereza).